The sequence spans 256 residues: Thiazole synthase (256 aa).

Lys96 serves as the catalytic Schiff-base intermediate with DXP. 1-deoxy-D-xylulose 5-phosphate-binding positions include Gly157, 184–185 (AG), and 206–207 (NT).

The protein belongs to the ThiG family. As to quaternary structure, homotetramer. Forms heterodimers with either ThiH or ThiS.

The protein resides in the cytoplasm. The enzyme catalyses [ThiS sulfur-carrier protein]-C-terminal-Gly-aminoethanethioate + 2-iminoacetate + 1-deoxy-D-xylulose 5-phosphate = [ThiS sulfur-carrier protein]-C-terminal Gly-Gly + 2-[(2R,5Z)-2-carboxy-4-methylthiazol-5(2H)-ylidene]ethyl phosphate + 2 H2O + H(+). It functions in the pathway cofactor biosynthesis; thiamine diphosphate biosynthesis. In terms of biological role, catalyzes the rearrangement of 1-deoxy-D-xylulose 5-phosphate (DXP) to produce the thiazole phosphate moiety of thiamine. Sulfur is provided by the thiocarboxylate moiety of the carrier protein ThiS. In vitro, sulfur can be provided by H(2)S. In Brucella canis (strain ATCC 23365 / NCTC 10854 / RM-666), this protein is Thiazole synthase.